The primary structure comprises 221 residues: MKKEFAVIGLGRFGGSICKALSEEGVEVMAMDIDEDKVNEYAKIASHAVIGDSTDESVLKNLGLRNFDHVIVAIGENIQASILTTLILKELGVHTITVKAQNDYHEKVLSKIGADHIVHPERDMAKRIAHNIVSNNVLDYLELSEEHSLVEIVANSRLAGNTLLDLDIRAKYGINIVAIKRGKEVIVSPLATEVIHQEDILIVIGSVTDISRFEKRVLHTK.

The 117-residue stretch at 2-118 (KKEFAVIGLG…LSKIGADHIV (117 aa)) folds into the RCK N-terminal domain. Residues arginine 12, 32–34 (DID), 52–53 (DS), 74–76 (IGE), 99–101 (KAQ), histidine 105, and glutamate 121 each bind NAD(+). The RCK C-terminal domain maps to 135–219 (NNVLDYLELS…ISRFEKRVLH (85 aa)).

It belongs to the KtrA potassium transport family. In terms of assembly, homodimer, tetramer (dimer of homodimer) and octamer (tetramer of homodimer). Part of the KtrCD complex formed by an octameric catalytic ring of KtrC and a membrane associated dimer of KtrD forming a potassium channel.

The protein localises to the cell membrane. Functionally, catalytic subunit of the KtrCD potassium uptake transporter. The 2 major potassium transporter complexes KtrAB and KtrCD confer resistance to both suddenly imposed and prolonged osmotic stress. The sequence is that of Ktr system potassium uptake protein C (ktrC) from Bacillus subtilis (strain 168).